The sequence spans 292 residues: Cyclin-dependent-like kinase 5 (292 aa).

Residues 4–286 (YDKMEKIGEG…ADAALRHAYF (283 aa)) enclose the Protein kinase domain. ATP is bound by residues 10–18 (IGEGTYGTV) and Lys33. Asp126 acts as the Proton acceptor in catalysis. Asn131 and Asp144 together coordinate Mg(2+).

It belongs to the protein kinase superfamily. CMGC Ser/Thr protein kinase family. CDC2/CDKX subfamily. As to quaternary structure, heterodimer composed of a catalytic subunit cdk-5 and a regulatory subunit cdka-1. Interaction with cdka-1 is required for cdk-5 activation. It depends on Mg(2+) as a cofactor.

It localises to the cytoplasm. It is found in the cell projection. The protein localises to the dendrite. The enzyme catalyses L-seryl-[protein] + ATP = O-phospho-L-seryl-[protein] + ADP + H(+). It carries out the reaction L-threonyl-[protein] + ATP = O-phospho-L-threonyl-[protein] + ADP + H(+). Its function is as follows. Proline-directed serine/threonine-protein kinase which, in several motor neurons, promotes the polarized trafficking of synaptic vesicles and dense-core vesicles (DCV). In the ventral nerve cord, phosphorylates lin-10 and thereby prevents lin-10-mediated anterograde trafficking of the glutamate receptor glr-1. Involved in the inhibition of glr-1 trafficking in hypoxic conditions. In DA motor neurons but not in DB motor neurons, regulates axonal transport of synaptic vesicle precursors by inhibiting dynein-mediated retrograde transport. Regulates the trafficking of dense-core vesicles in DA and DB motor neurons by promoting anterograde trafficking to the axon and preventing dynein-dependent trafficking to the dendrite. May regulate these processes in association with cdka-1/p35. Activity may be regulated by cyy-1. Involved in synapse formation during DD motor neuron remodeling by regulating transport of disassembled synaptic material to the new synaptic sites probably by activating the motor protein unc-104/kinesin-3. Regulates microtubule polarity in the dendrite of DB motor neurons. May also play a role in GABAergic synaptic vesicle localization in the ventral nerve cord. This chain is Cyclin-dependent-like kinase 5, found in Caenorhabditis elegans.